The following is a 208-amino-acid chain: Ribosomal RNA large subunit methyltransferase E (208 aa).

Residues G63, W65, D83, D99, and D124 each contribute to the S-adenosyl-L-methionine site. K164 serves as the catalytic Proton acceptor.

Belongs to the class I-like SAM-binding methyltransferase superfamily. RNA methyltransferase RlmE family.

Its subcellular location is the cytoplasm. It catalyses the reaction uridine(2552) in 23S rRNA + S-adenosyl-L-methionine = 2'-O-methyluridine(2552) in 23S rRNA + S-adenosyl-L-homocysteine + H(+). Functionally, specifically methylates the uridine in position 2552 of 23S rRNA at the 2'-O position of the ribose in the fully assembled 50S ribosomal subunit. This chain is Ribosomal RNA large subunit methyltransferase E, found in Salmonella agona (strain SL483).